The sequence spans 369 residues: tRNA pseudouridine synthase D (369 aa).

The Nucleophile role is filled by Asp80. Residues 156–318 enclose the TRUD domain; that stretch reads GIPNWFGEQR…LKQERRALRL (163 aa).

Belongs to the pseudouridine synthase TruD family.

It carries out the reaction uridine(13) in tRNA = pseudouridine(13) in tRNA. In terms of biological role, responsible for synthesis of pseudouridine from uracil-13 in transfer RNAs. The protein is tRNA pseudouridine synthase D of Xanthomonas euvesicatoria pv. vesicatoria (strain 85-10) (Xanthomonas campestris pv. vesicatoria).